The chain runs to 154 residues: 6,7-dimethyl-8-ribityllumazine synthase (154 aa).

5-amino-6-(D-ribitylamino)uracil contacts are provided by residues F22, 56–58, and 80–82; these read AFE and AVI. 85-86 contributes to the (2S)-2-hydroxy-3-oxobutyl phosphate binding site; sequence AT. Residue H88 is the Proton donor of the active site. F113 serves as a coordination point for 5-amino-6-(D-ribitylamino)uracil. R127 contacts (2S)-2-hydroxy-3-oxobutyl phosphate.

The protein belongs to the DMRL synthase family.

The enzyme catalyses (2S)-2-hydroxy-3-oxobutyl phosphate + 5-amino-6-(D-ribitylamino)uracil = 6,7-dimethyl-8-(1-D-ribityl)lumazine + phosphate + 2 H2O + H(+). Its pathway is cofactor biosynthesis; riboflavin biosynthesis; riboflavin from 2-hydroxy-3-oxobutyl phosphate and 5-amino-6-(D-ribitylamino)uracil: step 1/2. Its function is as follows. Catalyzes the formation of 6,7-dimethyl-8-ribityllumazine by condensation of 5-amino-6-(D-ribitylamino)uracil with 3,4-dihydroxy-2-butanone 4-phosphate. This is the penultimate step in the biosynthesis of riboflavin. This is 6,7-dimethyl-8-ribityllumazine synthase from Clostridium botulinum (strain 657 / Type Ba4).